We begin with the raw amino-acid sequence, 124 residues long: Small ribosomal subunit protein uS12 (124 aa).

Residue D89 is modified to 3-methylthioaspartic acid.

This sequence belongs to the universal ribosomal protein uS12 family. In terms of assembly, part of the 30S ribosomal subunit. Contacts proteins S8 and S17. May interact with IF1 in the 30S initiation complex.

With S4 and S5 plays an important role in translational accuracy. In terms of biological role, interacts with and stabilizes bases of the 16S rRNA that are involved in tRNA selection in the A site and with the mRNA backbone. Located at the interface of the 30S and 50S subunits, it traverses the body of the 30S subunit contacting proteins on the other side and probably holding the rRNA structure together. The combined cluster of proteins S8, S12 and S17 appears to hold together the shoulder and platform of the 30S subunit. This is Small ribosomal subunit protein uS12 from Pasteurella multocida (strain Pm70).